Here is a 209-residue protein sequence, read N- to C-terminus: Ribosomal RNA large subunit methyltransferase E (209 aa).

Glycine 63, tryptophan 65, aspartate 83, aspartate 99, and aspartate 124 together coordinate S-adenosyl-L-methionine. Lysine 164 functions as the Proton acceptor in the catalytic mechanism.

Belongs to the class I-like SAM-binding methyltransferase superfamily. RNA methyltransferase RlmE family.

The protein localises to the cytoplasm. It catalyses the reaction uridine(2552) in 23S rRNA + S-adenosyl-L-methionine = 2'-O-methyluridine(2552) in 23S rRNA + S-adenosyl-L-homocysteine + H(+). In terms of biological role, specifically methylates the uridine in position 2552 of 23S rRNA at the 2'-O position of the ribose in the fully assembled 50S ribosomal subunit. The sequence is that of Ribosomal RNA large subunit methyltransferase E from Yersinia enterocolitica serotype O:8 / biotype 1B (strain NCTC 13174 / 8081).